A 693-amino-acid polypeptide reads, in one-letter code: DNA ligase (693 aa).

NAD(+) contacts are provided by residues 43–47, 92–93, and Glu123; these read DEEYD and SL. The active-site N6-AMP-lysine intermediate is Lys125. NAD(+)-binding residues include Arg146, Glu180, Lys296, and Lys320. Cys414, Cys417, Cys433, and Cys438 together coordinate Zn(2+). Positions 595 to 684 constitute a BRCT domain; sequence VKYDVLKGLT…AKLKGYNFDE (90 aa).

This sequence belongs to the NAD-dependent DNA ligase family. LigA subfamily. Requires Mg(2+) as cofactor. It depends on Mn(2+) as a cofactor.

It catalyses the reaction NAD(+) + (deoxyribonucleotide)n-3'-hydroxyl + 5'-phospho-(deoxyribonucleotide)m = (deoxyribonucleotide)n+m + AMP + beta-nicotinamide D-nucleotide.. DNA ligase that catalyzes the formation of phosphodiester linkages between 5'-phosphoryl and 3'-hydroxyl groups in double-stranded DNA using NAD as a coenzyme and as the energy source for the reaction. It is essential for DNA replication and repair of damaged DNA. The chain is DNA ligase from Thermotoga neapolitana (strain ATCC 49049 / DSM 4359 / NBRC 107923 / NS-E).